Consider the following 459-residue polypeptide: SLIT-ROBO Rho GTPase-activating protein 2C (459 aa).

The F-BAR domain maps to Lys-22–Asp-325. The segment covering Leu-181–Gln-202 has biased composition (basic and acidic residues). A disordered region spans residues Leu-181–Ala-211. The stretch at Gln-363–Ile-401 forms a coiled coil.

Homodimer. Interacts (via F-BAR domain) with SRGAP2/SRGAP2A (via F-BAR domain); formation of the heterodimer inhibits SRGAP2/SRGAP2A function. Ubiquitously expressed with higher expression in cerebellum. Probably expressed in fetal and adult neurons (at protein level).

Functionally, human-specific protein that acts as a key modifier of cortical connectivity in the human brain. Acts by inhibiting the functions of ancestral paralog SRGAP2/SRGAP2A, a postsynaptic protein that regulates excitatory and inhibitory synapse maturation and density in cortical pyramidal neurons. SRGAP2C is unstable but is able to heterodimerize with SRGAP2/SRGAP2A, thereby reducing SRGAP2/SRGAP2A levels through proteasome-dependent degradation. Inhibition of SRGAP2/SRGAP2A by SRGAP2C leads to an increase in synaptic density and protracted synaptic maturation of both excitatory and inhibitory synapses. Modifies cortical circuit connectivity by increasing the number of local and long-range cortical inputs received by layer 2/3 pyramidal neurons. Also able to increase the probability of sensory-evoked responses by layer 2/3 pyramidal neurons. The polypeptide is SLIT-ROBO Rho GTPase-activating protein 2C (Homo sapiens (Human)).